We begin with the raw amino-acid sequence, 250 residues long: Vitamin B12 import ATP-binding protein BtuD (250 aa).

The ABC transporter domain occupies Leu3–Ala233. Gly29–Ser36 is an ATP binding site.

This sequence belongs to the ABC transporter superfamily. Vitamin B12 importer (TC 3.A.1.13.1) family. In terms of assembly, the complex is composed of two ATP-binding proteins (BtuD), two transmembrane proteins (BtuC) and a solute-binding protein (BtuF).

Its subcellular location is the cell inner membrane. It carries out the reaction an R-cob(III)alamin(out) + ATP + H2O = an R-cob(III)alamin(in) + ADP + phosphate + H(+). Its function is as follows. Part of the ABC transporter complex BtuCDF involved in vitamin B12 import. Responsible for energy coupling to the transport system. This chain is Vitamin B12 import ATP-binding protein BtuD, found in Pectobacterium atrosepticum (strain SCRI 1043 / ATCC BAA-672) (Erwinia carotovora subsp. atroseptica).